The sequence spans 325 residues: Helicase VP6-A (325 aa).

Disordered stretches follow at residues 1 to 122 (MLLA…GATG) and 185 to 230 (DLRR…EPAR). Basic and acidic residues-rich tracts occupy residues 8-18 (VIKRSSEELKQ), 32-54 (EGGKEDKTEPKEESKAEGSKDGE), 61-79 (GQKEEGGKETKDADVDRRI), and 92-105 (LGERANENADRGDG). Lys-106 contacts ATP. A compositionally biased stretch (gly residues) spans 106 to 122 (KVGGGGGDADAGVGATG). Basic and acidic residues-rich tracts occupy residues 185 to 203 (DLRRKEKNGTHAKAVERGG) and 211 to 229 (HGDAQREGVEEEKTSEEPA).

It belongs to the orbivirus VP6 family. As to quaternary structure, homohexamer.

It localises to the virion. The catalysed reaction is ATP + H2O = ADP + phosphate + H(+). Functionally, ATP dependent RNA helicase essential for RNA packaging and viral transcription. Possesses ss- and dsRNA-binding capacity. The chain is Helicase VP6-A (Segment-9) from Bluetongue virus 17 (isolate USA) (BTV 17).